Consider the following 152-residue polypeptide: Large ribosomal subunit protein uL15 (152 aa).

The disordered stretch occupies residues 1–55 (MRLHELKPNEGATHKKKRVGRGIGSGHGKTSTKGQKGQTSRSGDSKLPARFEGGQ). Over residues 28–42 (GKTSTKGQKGQTSRS) the composition is skewed to polar residues.

It belongs to the universal ribosomal protein uL15 family. As to quaternary structure, part of the 50S ribosomal subunit.

Its function is as follows. Binds to the 23S rRNA. In Sulfurihydrogenibium sp. (strain YO3AOP1), this protein is Large ribosomal subunit protein uL15.